A 321-amino-acid polypeptide reads, in one-letter code: Ribosomal RNA small subunit methyltransferase H (321 aa).

S-adenosyl-L-methionine-binding positions include 44-46 (GGH), Asp64, Phe88, Asp109, and Gln116.

Belongs to the methyltransferase superfamily. RsmH family.

Its subcellular location is the cytoplasm. The enzyme catalyses cytidine(1402) in 16S rRNA + S-adenosyl-L-methionine = N(4)-methylcytidine(1402) in 16S rRNA + S-adenosyl-L-homocysteine + H(+). Its function is as follows. Specifically methylates the N4 position of cytidine in position 1402 (C1402) of 16S rRNA. This Methylobacillus flagellatus (strain ATCC 51484 / DSM 6875 / VKM B-1610 / KT) protein is Ribosomal RNA small subunit methyltransferase H.